The chain runs to 242 residues: UPF0246 protein SSA_1395 (242 aa).

It belongs to the UPF0246 family.

This Streptococcus sanguinis (strain SK36) protein is UPF0246 protein SSA_1395.